The chain runs to 348 residues: Phospho-2-dehydro-3-deoxyheptonate aldolase, Trp-sensitive (348 aa).

Belongs to the class-I DAHP synthase family.

The catalysed reaction is D-erythrose 4-phosphate + phosphoenolpyruvate + H2O = 7-phospho-2-dehydro-3-deoxy-D-arabino-heptonate + phosphate. It participates in metabolic intermediate biosynthesis; chorismate biosynthesis; chorismate from D-erythrose 4-phosphate and phosphoenolpyruvate: step 1/7. Functionally, stereospecific condensation of phosphoenolpyruvate (PEP) and D-erythrose-4-phosphate (E4P) giving rise to 3-deoxy-D-arabino-heptulosonate-7-phosphate (DAHP). This is Phospho-2-dehydro-3-deoxyheptonate aldolase, Trp-sensitive (aroH) from Shigella flexneri.